The primary structure comprises 237 residues: MTLMSSLNTLFPGQPPKFEPHITISSNIDVDLDHPDKTKSDVYRILSASLVAIDSLPKNHSNLVTLGKVDSQRKFFKKLYFQVARDPNLVSFATIIRELFVQLPADIEQENMKKNPHLYTTDSHGNTVKKKSKQSQDGRIEAIDMPRIQSEAQEQASLWSVTEFDPHLSLVYNDLHPIDSALWRTIKTRIQDYLNIDNCDSDDLTDNGLGWDNGILKLVLCEGDVNDWVVLGSADLH.

His21 acts as the Proton donor/acceptor in catalysis. Position 23 (Thr23) interacts with substrate. The disordered stretch occupies residues 117–137 (HLYTTDSHGNTVKKKSKQSQD). Residue His167 is the Proton donor/acceptor of the active site. Substrate-binding residues include Ser169 and Tyr172.

The protein belongs to the 2H phosphoesterase superfamily. CPD1 family.

The protein resides in the golgi apparatus. The enzyme catalyses a nucleoside 2',3'-cyclic phosphate + H2O = a nucleoside 2'-phosphate + H(+). Its function is as follows. Involved in the metabolism of ADP-ribose 1',2'-cyclic phosphate which is produced as a consequence of tRNA splicing. The sequence is that of 2',3'-cyclic-nucleotide 3'-phosphodiesterase (CPD1) from Debaryomyces hansenii (strain ATCC 36239 / CBS 767 / BCRC 21394 / JCM 1990 / NBRC 0083 / IGC 2968) (Yeast).